We begin with the raw amino-acid sequence, 225 residues long: Uracil-DNA glycosylase (225 aa).

D65 (proton acceptor) is an active-site residue.

It belongs to the uracil-DNA glycosylase (UDG) superfamily. UNG family.

The protein localises to the cytoplasm. It catalyses the reaction Hydrolyzes single-stranded DNA or mismatched double-stranded DNA and polynucleotides, releasing free uracil.. Excises uracil residues from the DNA which can arise as a result of misincorporation of dUMP residues by DNA polymerase or due to deamination of cytosine. This Bacillus thuringiensis (strain Al Hakam) protein is Uracil-DNA glycosylase.